The sequence spans 623 residues: 1-butanol dehydrogenase (quinone) (623 aa).

Residues 1–28 (MKKSHAKPFALRAIVVATAAALSLPAAA) form the signal peptide. Ca(2+) is bound by residues Asp-40, Thr-43, and Asp-46. Glu-90 is a binding site for pyrroloquinoline quinone. Cys-134 and Cys-135 form a disulfide bridge. Residues Arg-140, Thr-184, and 202–204 (HGS) contribute to the pyrroloquinoline quinone site. Glu-208 contacts Ca(2+). Positions 235 to 274 (HMGRLNGKDSTPTGDPKAPSWPDDPNSPTGKVEAWSQGGG) are disordered. Ca(2+)-binding residues include Asn-295 and Asp-345. The active-site Proton acceptor is the Asp-345. Residue Arg-374 coordinates pyrroloquinoline quinone. The interval 420–440 (GKPIEKDNRPPQPKEGADKGE) is disordered. Ala-592 provides a ligand contact to pyrroloquinoline quinone.

It belongs to the bacterial PQQ dehydrogenase family. Requires pyrroloquinoline quinone as cofactor. Ca(2+) is required as a cofactor.

It is found in the periplasm. It carries out the reaction butan-1-ol + a quinone = butanal + a quinol. Involved in the metabolism of butane. May function primarily in energy generation. Catalyzes the oxidation of 1-butanol to 1-butanal. Also able to use 2-butanol and butyraldehyde, although the affinity is comparatively low. The polypeptide is 1-butanol dehydrogenase (quinone) (Thauera butanivorans (strain ATCC 43655 / DSM 2080 / JCM 20651 / CCUG 51053 / NBRC 103042 / IAM 12574 / Bu B1211) (Pseudomonas butanovora)).